The sequence spans 185 residues: ATP-dependent protease subunit HslV (185 aa).

T12 is a catalytic residue. A168, C171, and T174 together coordinate Na(+).

It belongs to the peptidase T1B family. HslV subfamily. As to quaternary structure, a double ring-shaped homohexamer of HslV is capped on each side by a ring-shaped HslU homohexamer. The assembly of the HslU/HslV complex is dependent on binding of ATP.

The protein resides in the cytoplasm. It carries out the reaction ATP-dependent cleavage of peptide bonds with broad specificity.. With respect to regulation, allosterically activated by HslU binding. Its function is as follows. Protease subunit of a proteasome-like degradation complex believed to be a general protein degrading machinery. This chain is ATP-dependent protease subunit HslV, found in Ruegeria pomeroyi (strain ATCC 700808 / DSM 15171 / DSS-3) (Silicibacter pomeroyi).